A 251-amino-acid chain; its full sequence is MAHRLQLRLLTWDVKDTLLRLRHPVGVEYATKARAHGLEVEATALGQAFKQAYKAQSQSFPNYGLGHGLTSHQWWLDLVQQTFHQAGVRDAQAVAPIAEQLYKDFSSPSTWQVLEGAEATLRGCRKRGLKLAVVSNFDRRLEDILEGVGLREHFDFVLTSEAAGWPKPDPRIFHEALHLAQVEPAVGAHIGDSYQRDYKGARAVGMHSFLVAGPEPLDPAVKDSVPQEHFLPSLSHLLPALDYLEGSSARL.

At Lys15 the chain carries N6-acetyllysine; alternate. Lys15 is modified (N6-succinyllysine; alternate). Lys130 is subject to N6-acetyllysine.

Belongs to the HAD-like hydrolase superfamily.

This Bos taurus (Bovine) protein is Haloacid dehalogenase-like hydrolase domain-containing protein 3 (HDHD3).